A 1740-amino-acid chain; its full sequence is DNA polymerase (1740 aa).

The disordered stretch occupies residues 472–491; the sequence is IEMPHNQEDSDSEKEDEDTD. Positions 480–491 are enriched in acidic residues; it reads DSDSEKEDEDTD. Positions 1189–1334 constitute a DOD-type homing endonuclease domain; the sequence is VWGFFMGDGS…LFYLLKSLGY (146 aa). The tract at residues 1673-1701 is disordered; it reads PKESGSKTAKKPYQSQKLQKTKSSNKSQI. Positions 1685-1700 are enriched in polar residues; the sequence is YQSQKLQKTKSSNKSQ.

The protein belongs to the DNA polymerase type-B family. This protein undergoes a protein self splicing that involves a post-translational excision of the intervening region (intein) followed by peptide ligation.

It carries out the reaction DNA(n) + a 2'-deoxyribonucleoside 5'-triphosphate = DNA(n+1) + diphosphate. The protein is DNA polymerase (POLB) of Acanthamoeba polyphaga (Amoeba).